The primary structure comprises 337 residues: Inositol 2-dehydrogenase (337 aa).

Belongs to the Gfo/Idh/MocA family. Homotetramer.

The catalysed reaction is myo-inositol + NAD(+) = scyllo-inosose + NADH + H(+). In terms of biological role, involved in the oxidation of myo-inositol (MI) to 2-keto-myo-inositol (2KMI or 2-inosose). The polypeptide is Inositol 2-dehydrogenase (Burkholderia cenocepacia (strain HI2424)).